The sequence spans 443 residues: Leucine-rich repeat-containing protein 17 (443 aa).

A signal peptide spans 1–15 (MRIVAILLLFCLCRA). Residues 20-48 (KSSPGVLRSQGNPSRSHGRGGRRGSSPVK) form a disordered region. LRR repeat units follow at residues 84-105 (DLLHMLLARNKIRVLKNNMFAK), 108-129 (RLKSLDLQQNEISKIESEAFFG), and 132-153 (KLTTLLLQHNQIKVLTEEAFIY). The LRRCT 1 domain maps to 165-216 (NPWHCTCELETLISMLQIPRNRNLGNYAKCGSPPALRNKKLLQLKPQELCDE). Residues 229 to 270 (SGIPAVIRPEADSTLCHNYVFPIQTLDCKRKELKKVPSNIPP) enclose the LRRNT domain. LRR repeat units lie at residues 271–292 (DIVKLDLSSNKIRQLRPKEFED), 295–316 (ELKKLNLSSNGIEFIDPAAFLG), and 319–342 (HLEELDLSNNSLQNFDYGVLEDLY). Positions 352-404 (NPWRCDYSIHYLYYWLKHHYNVHYNGLECKTPEEYKGWSVGKYVRSYYEECPK) constitute an LRRCT 2 domain.

In terms of tissue distribution, expressed in osteoblasts, spleen, lung and heart.

The protein resides in the secreted. Its subcellular location is the extracellular space. Functionally, involved in bone homeostasis. Acts as a negative regulator of RANKL-induced osteoclast precursor differentiation from bone marrow precursors. This Mus musculus (Mouse) protein is Leucine-rich repeat-containing protein 17 (Lrrc17).